The primary structure comprises 325 residues: ATP phosphoribosyltransferase (325 aa).

The protein belongs to the ATP phosphoribosyltransferase family. Long subfamily. Requires Mg(2+) as cofactor.

It localises to the cytoplasm. It carries out the reaction 1-(5-phospho-beta-D-ribosyl)-ATP + diphosphate = 5-phospho-alpha-D-ribose 1-diphosphate + ATP. The protein operates within amino-acid biosynthesis; L-histidine biosynthesis; L-histidine from 5-phospho-alpha-D-ribose 1-diphosphate: step 1/9. Feedback inhibited by histidine. Functionally, catalyzes the condensation of ATP and 5-phosphoribose 1-diphosphate to form N'-(5'-phosphoribosyl)-ATP (PR-ATP). Has a crucial role in the pathway because the rate of histidine biosynthesis seems to be controlled primarily by regulation of HisG enzymatic activity. The chain is ATP phosphoribosyltransferase from Nitrobacter hamburgensis (strain DSM 10229 / NCIMB 13809 / X14).